Consider the following 381-residue polypeptide: Formate dehydrogenase, mitochondrial (381 aa).

A mitochondrion-targeting transit peptide spans Met1 to Glu25. Substrate is bound by residues Ile125 and Asn149. Residues Thr150, Arg204 to Ile205, Asp224, Pro259 to Lys263, Asn285, Asp311, and His335 to Gly338 each bind NAD(+).

This sequence belongs to the D-isomer specific 2-hydroxyacid dehydrogenase family. FDH subfamily. As to quaternary structure, homodimer. Found at high levels in developing tubers, at intermediate level in stems, veins, stolons, and stamens, and at low level in leaves and roots.

The protein localises to the mitochondrion. It carries out the reaction formate + NAD(+) = CO2 + NADH. In terms of biological role, catalyzes the NAD(+)-dependent oxidation of formate to carbon dioxide. Involved in the cell stress response. Involved in formate-dependent oxygen uptake coupled to ATP synthesis. The protein is Formate dehydrogenase, mitochondrial of Solanum tuberosum (Potato).